The following is a 301-amino-acid chain: DNA repair protein RecO (301 aa).

The segment at 272–301 (PTPSGQGSPVAAAAFSEEDSETLGSNLKKL) is disordered.

Belongs to the RecO family.

Its function is as follows. Involved in DNA repair and RecF pathway recombination. The sequence is that of DNA repair protein RecO from Synechococcus sp. (strain JA-3-3Ab) (Cyanobacteria bacterium Yellowstone A-Prime).